Reading from the N-terminus, the 432-residue chain is Enolase (432 aa).

Q166 lines the (2R)-2-phosphoglycerate pocket. The active-site Proton donor is E208. Mg(2+)-binding residues include D245, E291, and D318. 4 residues coordinate (2R)-2-phosphoglycerate: K343, R372, S373, and K394. Residue K343 is the Proton acceptor of the active site.

It belongs to the enolase family. It depends on Mg(2+) as a cofactor.

Its subcellular location is the cytoplasm. It is found in the secreted. The protein localises to the cell surface. It catalyses the reaction (2R)-2-phosphoglycerate = phosphoenolpyruvate + H2O. The protein operates within carbohydrate degradation; glycolysis; pyruvate from D-glyceraldehyde 3-phosphate: step 4/5. Its function is as follows. Catalyzes the reversible conversion of 2-phosphoglycerate (2-PG) into phosphoenolpyruvate (PEP). It is essential for the degradation of carbohydrates via glycolysis. The chain is Enolase from Leptospira interrogans serogroup Icterohaemorrhagiae serovar copenhageni (strain Fiocruz L1-130).